A 29-amino-acid polypeptide reads, in one-letter code: Kalata-B4 (29 aa).

A cross-link (cyclopeptide (Gly-Asp)) is located at residues glycine 1–aspartate 29. 3 cysteine pairs are disulfide-bonded: cysteine 5/cysteine 19, cysteine 9/cysteine 21, and cysteine 14/cysteine 26.

This is a cyclic peptide.

In terms of biological role, probably participates in a plant defense mechanism. The protein is Kalata-B4 of Oldenlandia affinis.